The following is a 338-amino-acid chain: mRNA decay activator protein ZFP36L1 (338 aa).

A necessary and sufficient for the association with mRNA decay enzymes and mRNA decay activation region spans residues 1–111; sequence MTTTLVSATI…QKQPGSGQVN (111 aa). Serine 54 carries the post-translational modification Phosphoserine; by MAPKAPK2. The tract at residues 71-113 is disordered; it reads LKGEPAPSLSSRDSRFRDRSFSEGGERLLPTQKQPGSGQVNSS. The span at 82-96 shows a compositional bias: basic and acidic residues; the sequence is RDSRFRDRSFSEGGE. The residue at position 90 (serine 90) is a Phosphoserine; by PKB/AKT1. Serine 92 bears the Phosphoserine; by PKB/AKT1 and MAPKAPK2 mark. The segment covering 101 to 113 has biased composition (polar residues); sequence TQKQPGSGQVNSS. 2 consecutive C3H1-type zinc fingers follow at residues 114-142 and 152-180; these read RYKT…HGIH and KYKT…HNAE. Residues 185–338 form a necessary for mRNA decay activation region; sequence LAGGRDLSAD…IFSRLSISDD (154 aa). Residue serine 203 is modified to Phosphoserine; by PKB/AKT1 and MAPKAPK2. The tract at residues 273-338 is disordered; that stretch reads SPTTFLFRPM…IFSRLSISDD (66 aa). The span at 305–318 shows a compositional bias: low complexity; sequence YLSSSSSSHSGSDS. Serine 318 bears the Phosphoserine mark. Serine 334 carries the post-translational modification Phosphoserine; by RPS6KA1.

As to quaternary structure, associates with the cytoplasmic CCR4-NOT deadenylase and RNA exosome complexes to trigger ARE-containing mRNA deadenylation and decay processes. Interacts with CNOT1. Interacts (via N-terminus) with CNOT6. Interacts with CNOT7; this interaction is inhibited in response to phorbol 12-myristate 13-acetate (PMA) treatment in a p38 MAPK-dependent manner. Interacts with DCP1A. Interacts (via N-terminus) with DCP2. Interacts (via N-terminus) with EXOSC2. Interacts with XRN1. Interacts (via phosphorylated form) with YWHAB; this interaction occurs in a protein kinase AKT1-dependent manner. Interacts (via phosphorylated form) with YWHAZ; this interaction occurs in a p38 MAPK- and AKT-signaling pathways. In terms of processing, phosphorylated. Phosphorylated by RPS6KA1 at Ser-334 upon phorbol 12-myristate 13-acetate (PMA) treatment; this phosphorylation results in dissociation of the CCR4-NOT deadenylase complex and induces p38 MAPK-mediated stabilization of the low-density lipoprotein receptor LDLR mRNA. Phosphorylated by protein kinase AKT1 at Ser-92 and Ser-203 in response to insulin; these phosphorylations stabilize ZFP36L1, increase the association with 14-3-3 proteins and mediate ARE-containing mRNA stabilization. AKT1-mediated phosphorylation at Ser-92 does not impair ARE-containing RNA-binding. Phosphorylated at Ser-54, Ser-92 and Ser-203 by MAPKAPK2; these phosphorylations increase the association with 14-3-3 proteins and mediate ARE-containing mRNA stabilization in a protein kinase AKT1-independent manner. MAPKAPK2-mediated phosphorylations at Ser-54, Ser-92 and Ser-203 do not impair ARE-containing RNA-binding. Phosphorylations increase the association with 14-3-3 proteins and mediate ARE-containing mRNA stabilization during early adipogenesis in a p38 MAPK- and AKT-dependent manner. Post-translationally, ubiquitinated. Ubiquitination leads to proteasomal degradation, a process inhibited by phosphorylations at Ser-90, Ser-92 and Ser-203. In terms of tissue distribution, expressed in preadipocytes and adipocytes. Expressed in the proximal and distal tubules in the renal cortex (at protein level). Expressed in ovary, heart, kidney, lung, spleen and thymus. Weakly expressed in brain, liver and testis. Expressed in osteoblasts. Expressed in embryonic stem cells (ESCs). Expressed through B lymphocyte development.

It localises to the nucleus. It is found in the cytoplasm. The protein resides in the cytoplasmic granule. The protein localises to the P-body. Its function is as follows. Zinc-finger RNA-binding protein that destabilizes several cytoplasmic AU-rich element (ARE)-containing mRNA transcripts by promoting their poly(A) tail removal or deadenylation, and hence provide a mechanism for attenuating protein synthesis. Acts as a 3'-untranslated region (UTR) ARE mRNA-binding adapter protein to communicate signaling events to the mRNA decay machinery. Functions by recruiting the CCR4-NOT deadenylating complex and components of the cytoplasmic RNA decay machinery to the bound ARE-containing mRNAs, and hence promotes ARE-mediated mRNA deadenylation and decay processes. Also induces the degradation of ARE-containing mRNAs even in absence of poly(A) tail. Binds to 3'-UTR ARE of numerous mRNAs. Positively regulates early adipogenesis by promoting ARE-mediated mRNA decay of immediate early genes (IEGs). Promotes ARE-mediated mRNA decay of mineralocorticoid receptor NR3C2 mRNA in response to hypertonic stress. Negatively regulates hematopoietic/erythroid cell differentiation by promoting ARE-mediated mRNA decay of the transcription factor STAT5B mRNA. Positively regulates monocyte/macrophage cell differentiation by promoting ARE-mediated mRNA decay of the cyclin-dependent kinase CDK6 mRNA. Promotes degradation of ARE-containing pluripotency-associated mRNAs in embryonic stem cells (ESCs), such as NANOG, through a fibroblast growth factor (FGF)-induced MAPK-dependent signaling pathway, and hence attenuates ESC self-renewal and positively regulates mesendoderm differentiation. May play a role in mediating pro-apoptotic effects in malignant B-cells by promoting ARE-mediated mRNA decay of BCL2 mRNA. In association with ZFP36L2 maintains quiescence on developing B lymphocytes by promoting ARE-mediated decay of several mRNAs encoding cell cycle regulators that help B cells progress through the cell cycle, and hence ensuring accurate variable-diversity-joining (VDJ) recombination and functional immune cell formation. Together with ZFP36L2 is also necessary for thymocyte development and prevention of T-cell acute lymphoblastic leukemia (T-ALL) transformation by promoting ARE-mediated mRNA decay of the oncogenic transcription factor NOTCH1 mRNA. Involved in the delivery of target ARE-mRNAs to processing bodies (PBs). In addition to its cytosolic mRNA-decay function, plays a role in the regulation of nuclear mRNA 3'-end processing; modulates mRNA 3'-end maturation efficiency of the DLL4 mRNA through binding with an ARE embedded in a weak noncanonical polyadenylation (poly(A)) signal in endothelial cells. Also involved in the regulation of stress granule (SG) and P-body (PB) formation and fusion. Plays a role in vasculogenesis and endocardial development. Involved in the regulation of keratinocyte proliferation, differentiation and apoptosis. Plays a role in myoblast cell differentiation. The protein is mRNA decay activator protein ZFP36L1 of Mus musculus (Mouse).